We begin with the raw amino-acid sequence, 455 residues long: Catalase-like protein (455 aa).

The interval 1-25 is disordered; sequence MSQQDKKLTGVFGHPVSDRENSMTA.

This sequence belongs to the catalase family.

Catalytically inactive. The protein is Catalase-like protein (katB) of Staphylococcus aureus.